The chain runs to 497 residues: Glycerol kinase (497 aa).

Residue T13 coordinates ADP. Residues T13, T14, and S15 each coordinate ATP. T13 contacts sn-glycerol 3-phosphate. R17 contacts ADP. Sn-glycerol 3-phosphate-binding residues include R83, E84, and Y135. Positions 83, 84, and 135 each coordinate glycerol. H231 carries the phosphohistidine; by HPr modification. D245 is a sn-glycerol 3-phosphate binding site. 2 residues coordinate glycerol: D245 and Q246. Residues T267 and G310 each coordinate ADP. T267, G310, Q314, and G411 together coordinate ATP. ADP contacts are provided by G411 and N415.

This sequence belongs to the FGGY kinase family. In terms of assembly, homotetramer and homodimer (in equilibrium). In terms of processing, the phosphoenolpyruvate-dependent sugar phosphotransferase system (PTS), including enzyme I, and histidine-containing protein (HPr) are required for the phosphorylation, which leads to the activation of the enzyme.

The enzyme catalyses glycerol + ATP = sn-glycerol 3-phosphate + ADP + H(+). It participates in polyol metabolism; glycerol degradation via glycerol kinase pathway; sn-glycerol 3-phosphate from glycerol: step 1/1. Activated by phosphorylation and inhibited by fructose 1,6-bisphosphate (FBP). Its function is as follows. Key enzyme in the regulation of glycerol uptake and metabolism. Catalyzes the phosphorylation of glycerol to yield sn-glycerol 3-phosphate. The polypeptide is Glycerol kinase (Listeria monocytogenes serovar 1/2a (strain ATCC BAA-679 / EGD-e)).